Here is a 169-residue protein sequence, read N- to C-terminus: Large ribosomal subunit protein bL9 (169 aa).

This sequence belongs to the bacterial ribosomal protein bL9 family.

In terms of biological role, binds to the 23S rRNA. This chain is Large ribosomal subunit protein bL9, found in Chlamydia pneumoniae (Chlamydophila pneumoniae).